Consider the following 175-residue polypeptide: RNA pyrophosphohydrolase (175 aa).

The region spanning 6 to 149 is the Nudix hydrolase domain; the sequence is GYRPNVGIVI…KRDVYRRVMK (144 aa). Residues 38–59 carry the Nudix box motif; sequence GGINPGETPEQAMYRELFEEVG.

This sequence belongs to the Nudix hydrolase family. RppH subfamily. The cofactor is a divalent metal cation.

Its function is as follows. Accelerates the degradation of transcripts by removing pyrophosphate from the 5'-end of triphosphorylated RNA, leading to a more labile monophosphorylated state that can stimulate subsequent ribonuclease cleavage. The protein is RNA pyrophosphohydrolase of Yersinia enterocolitica serotype O:8 / biotype 1B (strain NCTC 13174 / 8081).